Here is a 189-residue protein sequence, read N- to C-terminus: Peptidyl-tRNA hydrolase (189 aa).

Tyr15 serves as a coordination point for tRNA. The active-site Proton acceptor is the His20. Phe64 and Asn66 together coordinate tRNA.

This sequence belongs to the PTH family. Monomer.

Its subcellular location is the cytoplasm. It carries out the reaction an N-acyl-L-alpha-aminoacyl-tRNA + H2O = an N-acyl-L-amino acid + a tRNA + H(+). Functionally, hydrolyzes ribosome-free peptidyl-tRNAs (with 1 or more amino acids incorporated), which drop off the ribosome during protein synthesis, or as a result of ribosome stalling. Catalyzes the release of premature peptidyl moieties from peptidyl-tRNA molecules trapped in stalled 50S ribosomal subunits, and thus maintains levels of free tRNAs and 50S ribosomes. The polypeptide is Peptidyl-tRNA hydrolase (Persephonella marina (strain DSM 14350 / EX-H1)).